The chain runs to 313 residues: Porphobilinogen deaminase (313 aa).

C242 is subject to S-(dipyrrolylmethanemethyl)cysteine.

This sequence belongs to the HMBS family. In terms of assembly, monomer. The cofactor is dipyrromethane.

The catalysed reaction is 4 porphobilinogen + H2O = hydroxymethylbilane + 4 NH4(+). It participates in porphyrin-containing compound metabolism; protoporphyrin-IX biosynthesis; coproporphyrinogen-III from 5-aminolevulinate: step 2/4. In terms of biological role, tetrapolymerization of the monopyrrole PBG into the hydroxymethylbilane pre-uroporphyrinogen in several discrete steps. This is Porphobilinogen deaminase from Pseudomonas paraeruginosa (strain DSM 24068 / PA7) (Pseudomonas aeruginosa (strain PA7)).